A 190-amino-acid chain; its full sequence is Xanthine phosphoribosyltransferase (190 aa).

Xanthine-binding residues include leucine 20 and asparagine 27. Residue alanine 128–alanine 132 participates in 5-phospho-alpha-D-ribose 1-diphosphate binding. Residue lysine 156 participates in xanthine binding.

This sequence belongs to the purine/pyrimidine phosphoribosyltransferase family. Xpt subfamily. Homodimer.

Its subcellular location is the cytoplasm. The catalysed reaction is XMP + diphosphate = xanthine + 5-phospho-alpha-D-ribose 1-diphosphate. It functions in the pathway purine metabolism; XMP biosynthesis via salvage pathway; XMP from xanthine: step 1/1. Functionally, converts the preformed base xanthine, a product of nucleic acid breakdown, to xanthosine 5'-monophosphate (XMP), so it can be reused for RNA or DNA synthesis. The sequence is that of Xanthine phosphoribosyltransferase from Clostridium botulinum (strain Eklund 17B / Type B).